The sequence spans 114 residues: Transcription initiation factor IIA subunit 2 (114 aa).

It belongs to the TFIIA subunit 2 family. TFIIA is a heterodimer composed of the large toa1 and the small toa2 subunits.

Its subcellular location is the nucleus. In terms of biological role, TFIIA is a component of the transcription machinery of RNA polymerase II and plays an important role in transcriptional activation. TFIIA in a complex with tbp mediates transcriptional activity. The chain is Transcription initiation factor IIA subunit 2 (toa2) from Fusarium vanettenii (strain ATCC MYA-4622 / CBS 123669 / FGSC 9596 / NRRL 45880 / 77-13-4) (Fusarium solani subsp. pisi).